Consider the following 354-residue polypeptide: UDP-3-O-acylglucosamine N-acyltransferase (354 aa).

Histidine 247 acts as the Proton acceptor in catalysis.

Belongs to the transferase hexapeptide repeat family. LpxD subfamily. As to quaternary structure, homotrimer.

It catalyses the reaction a UDP-3-O-[(3R)-3-hydroxyacyl]-alpha-D-glucosamine + a (3R)-hydroxyacyl-[ACP] = a UDP-2-N,3-O-bis[(3R)-3-hydroxyacyl]-alpha-D-glucosamine + holo-[ACP] + H(+). Its pathway is bacterial outer membrane biogenesis; LPS lipid A biosynthesis. Functionally, catalyzes the N-acylation of UDP-3-O-acylglucosamine using 3-hydroxyacyl-ACP as the acyl donor. Is involved in the biosynthesis of lipid A, a phosphorylated glycolipid that anchors the lipopolysaccharide to the outer membrane of the cell. The chain is UDP-3-O-acylglucosamine N-acyltransferase from Chlamydia trachomatis serovar L2 (strain ATCC VR-902B / DSM 19102 / 434/Bu).